We begin with the raw amino-acid sequence, 344 residues long: uncharacterized protein (344 aa).

An N-terminal signal peptide occupies residues 1–28; it reads MNKKSLNIVATLGILLVLAFSGCVDQSA.

It belongs to the bacterial solute-binding protein 1 family. WtpA subfamily.

This is an uncharacterized protein from Methanococcus maripaludis (strain C7 / ATCC BAA-1331).